Here is a 192-residue protein sequence, read N- to C-terminus: Small ribosomal subunit protein eS7 (192 aa).

It belongs to the eukaryotic ribosomal protein eS7 family.

The sequence is that of Small ribosomal subunit protein eS7 (RpS7) from Culex quinquefasciatus (Southern house mosquito).